The chain runs to 471 residues: Zinc finger protein 385B (471 aa).

A required for induction of apoptosis region spans residues 1-93 (MNMANFLRGF…TGSTCHTTTL (93 aa)). The segment at 34-64 (SFCEVCNIQLNSAAQAQVHSNGKSHRKRVKQ) adopts a Matrin-type 1 zinc-finger fold. Disordered regions lie at residues 50 to 92 (QVHS…HTTT) and 175 to 275 (HYKG…TVVE). Low complexity predominate over residues 76–92 (ASPSSNSSTGSTCHTTT). The segment at 94–471 (PALVRTPTLM…TPASILFAPY (378 aa)) is interaction with p53/TP53. The Matrin-type 2 zinc finger occupies 157 to 187 (ISCNVCQLRFNSDSQAEAHYKGSKHAKKVKA). Residues 206 to 220 (ANPSCSITPITGNNS) show a composition bias toward polar residues. Over residues 230 to 250 (KASSSSQPSSSESGSFLLKSG) the composition is skewed to low complexity. Residues 260-269 (TSPSKSTNGA) are compositionally biased toward polar residues. The Matrin-type 3 zinc-finger motif lies at 282–316 (KKLLYCSLCKVAVNSLSQLEAHNTGSKHKTMVEAR). The disordered stretch occupies residues 318 to 340 (GAGPIKSYPRPGSRLKMQNGSKG). The segment at 348-378 (FHCEICDVHVNSEIQLKQHISSRRHKDRVAG) adopts a Matrin-type 4 zinc-finger fold.

In terms of assembly, interacts with p53/TP53; the interaction is direct. In terms of tissue distribution, detected in germinal center of lymph node (at protein level). Expressed in spleen, lymph node and tonsil.

It localises to the nucleus. In terms of biological role, may play a role in p53/TP53-mediated apoptosis. This Homo sapiens (Human) protein is Zinc finger protein 385B (ZNF385B).